Reading from the N-terminus, the 138-residue chain is Large ribosomal subunit protein uL14 (138 aa).

This sequence belongs to the universal ribosomal protein uL14 family. In terms of assembly, part of the 50S ribosomal subunit. Forms a cluster with proteins L3 and L24e, part of which may contact the 16S rRNA in 2 intersubunit bridges. Contacts initiation factor aIF-6.

The protein resides in the cytoplasm. Functionally, binds to 23S rRNA. Forms part of two intersubunit bridges in the 70S ribosome. The sequence is that of Large ribosomal subunit protein uL14 from Saccharolobus solfataricus (strain ATCC 35092 / DSM 1617 / JCM 11322 / P2) (Sulfolobus solfataricus).